Reading from the N-terminus, the 475-residue chain is Aspartyl/glutamyl-tRNA(Asn/Gln) amidotransferase subunit B (475 aa).

It belongs to the GatB/GatE family. GatB subfamily. Heterotrimer of A, B and C subunits.

It carries out the reaction L-glutamyl-tRNA(Gln) + L-glutamine + ATP + H2O = L-glutaminyl-tRNA(Gln) + L-glutamate + ADP + phosphate + H(+). The enzyme catalyses L-aspartyl-tRNA(Asn) + L-glutamine + ATP + H2O = L-asparaginyl-tRNA(Asn) + L-glutamate + ADP + phosphate + 2 H(+). Its function is as follows. Allows the formation of correctly charged Asn-tRNA(Asn) or Gln-tRNA(Gln) through the transamidation of misacylated Asp-tRNA(Asn) or Glu-tRNA(Gln) in organisms which lack either or both of asparaginyl-tRNA or glutaminyl-tRNA synthetases. The reaction takes place in the presence of glutamine and ATP through an activated phospho-Asp-tRNA(Asn) or phospho-Glu-tRNA(Gln). This is Aspartyl/glutamyl-tRNA(Asn/Gln) amidotransferase subunit B from Agathobacter rectalis (strain ATCC 33656 / DSM 3377 / JCM 17463 / KCTC 5835 / VPI 0990) (Eubacterium rectale).